A 278-amino-acid polypeptide reads, in one-letter code: uncharacterized protein (278 aa).

Residues 1 to 16 (MFGLKVKDAQKDDQKS) show a composition bias toward basic and acidic residues. Disordered stretches follow at residues 1–86 (MFGL…RGSN) and 98–126 (FGTT…TPWL). Low complexity-rich tracts occupy residues 33–45 (QGTS…RGSS) and 99–117 (GTTS…STPS).

It belongs to the adhesin P1 family.

This is an uncharacterized protein from Mycoplasma pneumoniae (strain ATCC 29342 / M129 / Subtype 1) (Mycoplasmoides pneumoniae).